The following is a 55-amino-acid chain: Large ribosomal subunit protein bL33 (55 aa).

This sequence belongs to the bacterial ribosomal protein bL33 family.

The polypeptide is Large ribosomal subunit protein bL33 (Rhizobium meliloti (strain 1021) (Ensifer meliloti)).